A 623-amino-acid polypeptide reads, in one-letter code: Chaperone protein DnaK (623 aa).

Position 197 is a phosphothreonine; by autocatalysis (Thr-197). Basic and acidic residues predominate over residues 595–615 (AENMYKKDEPNTANDKKKKDD). A disordered region spans residues 595–623 (AENMYKKDEPNTANDKKKKDDDVIDAEVE).

It belongs to the heat shock protein 70 family.

In terms of biological role, acts as a chaperone. This Campylobacter jejuni subsp. doylei (strain ATCC BAA-1458 / RM4099 / 269.97) protein is Chaperone protein DnaK.